Consider the following 268-residue polypeptide: Undecaprenyl-diphosphatase (268 aa).

7 consecutive transmembrane segments (helical) span residues 5–25 (SIIS…IPVS), 43–63 (GNTF…LVYF), 84–104 (LSVL…HGFI), 109–129 (FETP…LYVI), 184–204 (AAEF…ALDL), 213–233 (IDDI…GIFV), and 248–268 (PFAI…WLLG).

The protein belongs to the UppP family.

Its subcellular location is the cell inner membrane. The enzyme catalyses di-trans,octa-cis-undecaprenyl diphosphate + H2O = di-trans,octa-cis-undecaprenyl phosphate + phosphate + H(+). Its function is as follows. Catalyzes the dephosphorylation of undecaprenyl diphosphate (UPP). Confers resistance to bacitracin. The chain is Undecaprenyl-diphosphatase from Sinorhizobium medicae (strain WSM419) (Ensifer medicae).